The primary structure comprises 163 residues: Transcription antitermination protein NusB (163 aa).

Positions 1–21 are disordered; that stretch reads MTTFLSDSEHPQDVKAPPKSA.

It belongs to the NusB family.

Functionally, involved in transcription antitermination. Required for transcription of ribosomal RNA (rRNA) genes. Binds specifically to the boxA antiterminator sequence of the ribosomal RNA (rrn) operons. The chain is Transcription antitermination protein NusB from Dechloromonas aromatica (strain RCB).